Consider the following 327-residue polypeptide: Ketol-acid reductoisomerase (NADP(+)) (327 aa).

In terms of domain architecture, KARI N-terminal Rossmann spans 2-182 (AKIYTDKDAS…GATRAGVIET (181 aa)). NADP(+)-binding positions include 25 to 28 (YGIQ), arginine 48, serine 53, and 83 to 86 (DMEQ). Histidine 108 is a catalytic residue. Glycine 134 contacts NADP(+). Residues 183-327 (TFAEETETDL…GAEMRKLLFG (145 aa)) enclose the KARI C-terminal knotted domain. Mg(2+)-binding residues include aspartate 191, glutamate 195, glutamate 227, and glutamate 231. Substrate is bound at residue serine 252.

Belongs to the ketol-acid reductoisomerase family. The cofactor is Mg(2+).

The enzyme catalyses (2R)-2,3-dihydroxy-3-methylbutanoate + NADP(+) = (2S)-2-acetolactate + NADPH + H(+). It carries out the reaction (2R,3R)-2,3-dihydroxy-3-methylpentanoate + NADP(+) = (S)-2-ethyl-2-hydroxy-3-oxobutanoate + NADPH + H(+). The protein operates within amino-acid biosynthesis; L-isoleucine biosynthesis; L-isoleucine from 2-oxobutanoate: step 2/4. It functions in the pathway amino-acid biosynthesis; L-valine biosynthesis; L-valine from pyruvate: step 2/4. Functionally, involved in the biosynthesis of branched-chain amino acids (BCAA). Catalyzes an alkyl-migration followed by a ketol-acid reduction of (S)-2-acetolactate (S2AL) to yield (R)-2,3-dihydroxy-isovalerate. In the isomerase reaction, S2AL is rearranged via a Mg-dependent methyl migration to produce 3-hydroxy-3-methyl-2-ketobutyrate (HMKB). In the reductase reaction, this 2-ketoacid undergoes a metal-dependent reduction by NADPH to yield (R)-2,3-dihydroxy-isovalerate. The chain is Ketol-acid reductoisomerase (NADP(+)) from Pyrobaculum neutrophilum (strain DSM 2338 / JCM 9278 / NBRC 100436 / V24Sta) (Thermoproteus neutrophilus).